An 87-amino-acid polypeptide reads, in one-letter code: Small ribosomal subunit protein uS17 (87 aa).

The protein belongs to the universal ribosomal protein uS17 family. Part of the 30S ribosomal subunit.

In terms of biological role, one of the primary rRNA binding proteins, it binds specifically to the 5'-end of 16S ribosomal RNA. In Geobacillus sp. (strain WCH70), this protein is Small ribosomal subunit protein uS17.